We begin with the raw amino-acid sequence, 166 residues long: Interferon gamma (166 aa).

Positions 1-23 are cleaved as a signal peptide; the sequence is MKYTSSFLALLLSVLLGFSGSYG. Position 24 is a pyrrolidone carboxylic acid (Gln24). N-linked (GlcNAc...) asparagine glycosylation is found at Asn39 and Asn106.

It belongs to the type II (or gamma) interferon family. Homodimer. Interacts with IFNGR1 (via extracellular domain); this interaction promotes IFNGR1 dimerization. Released primarily from activated T lymphocytes.

It localises to the secreted. Type II interferon produced by immune cells such as T-cells and NK cells that plays crucial roles in antimicrobial, antiviral, and antitumor responses by activating effector immune cells and enhancing antigen presentation. Primarily signals through the JAK-STAT pathway after interaction with its receptor IFNGR1 to affect gene regulation. Upon IFNG binding, IFNGR1 intracellular domain opens out to allow association of downstream signaling components JAK2, JAK1 and STAT1, leading to STAT1 activation, nuclear translocation and transcription of IFNG-regulated genes. Many of the induced genes are transcription factors such as IRF1 that are able to further drive regulation of a next wave of transcription. Plays a role in class I antigen presentation pathway by inducing a replacement of catalytic proteasome subunits with immunoproteasome subunits. In turn, increases the quantity, quality, and repertoire of peptides for class I MHC loading. Increases the efficiency of peptide generation also by inducing the expression of activator PA28 that associates with the proteasome and alters its proteolytic cleavage preference. Up-regulates as well MHC II complexes on the cell surface by promoting expression of several key molecules such as cathepsins B/CTSB, H/CTSH, and L/CTSL. Participates in the regulation of hematopoietic stem cells during development and under homeostatic conditions by affecting their development, quiescence, and differentiation. The polypeptide is Interferon gamma (IFNG) (Capra hircus (Goat)).